Consider the following 118-residue polypeptide: MTRVKRGSVARKYRKNILDFVSGFRGAHSKLFRTANQRRGRSLAYAYVDKNNSKRAFRRLWIARINAAARRDGITYSSVIHSLYKNRIALNRKTLAQIATLDAYCFSMIIEKVSKIKI.

It belongs to the bacterial ribosomal protein bL20 family.

Its subcellular location is the plastid. It is found in the chloroplast. Its function is as follows. Binds directly to 23S ribosomal RNA and is necessary for the in vitro assembly process of the 50S ribosomal subunit. It is not involved in the protein synthesizing functions of that subunit. This Adiantum capillus-veneris (Maidenhair fern) protein is Large ribosomal subunit protein bL20c.